A 295-amino-acid chain; its full sequence is Nucleotide-binding protein LACR_1047 (295 aa).

An ATP-binding site is contributed by 12–19; the sequence is GMSGAGKT. Position 63–66 (63–66) interacts with GTP; sequence DMRS.

It belongs to the RapZ-like family.

In terms of biological role, displays ATPase and GTPase activities. This chain is Nucleotide-binding protein LACR_1047, found in Lactococcus lactis subsp. cremoris (strain SK11).